The following is a 270-amino-acid chain: Glutamate racemase (270 aa).

Residues 7-8 (DS) and 39-40 (YG) contribute to the substrate site. Cysteine 70 (proton donor/acceptor) is an active-site residue. Position 71–72 (71–72 (NT)) interacts with substrate. Cysteine 194 serves as the catalytic Proton donor/acceptor. 195–196 (TH) is a substrate binding site.

The protein belongs to the aspartate/glutamate racemases family.

The catalysed reaction is L-glutamate = D-glutamate. It participates in cell wall biogenesis; peptidoglycan biosynthesis. Functionally, provides the (R)-glutamate required for cell wall biosynthesis. The sequence is that of Glutamate racemase from Cereibacter sphaeroides (strain ATCC 17023 / DSM 158 / JCM 6121 / CCUG 31486 / LMG 2827 / NBRC 12203 / NCIMB 8253 / ATH 2.4.1.) (Rhodobacter sphaeroides).